A 142-amino-acid chain; its full sequence is Large ribosomal subunit protein uL13 (142 aa).

Belongs to the universal ribosomal protein uL13 family. Part of the 50S ribosomal subunit.

In terms of biological role, this protein is one of the early assembly proteins of the 50S ribosomal subunit, although it is not seen to bind rRNA by itself. It is important during the early stages of 50S assembly. The sequence is that of Large ribosomal subunit protein uL13 from Marinomonas sp. (strain MWYL1).